The chain runs to 502 residues: Xyloglucan-specific endo-beta-1,4-glucanase BoGH5A (502 aa).

A signal peptide spans 1–32 (MEKQSFSDGLFSPLGIKRVIFMLVLLTTSFIS). Cys-33 carries N-palmitoyl cysteine lipidation. A lipid anchor (S-diacylglycerol cysteine) is attached at Cys-33. The BACON domain maps to 67-127 (GPAEWHISTS…PDIIINVKQS (61 aa)). The substrate site is built by Asn-165, Val-172, His-251, and Asn-296. Catalysis depends on Glu-297, which acts as the Proton donor. Glu-430 acts as the Nucleophile in catalysis. Trp-472 contacts substrate.

The protein belongs to the glycosyl hydrolase 5 (cellulase A) family.

It is found in the cell outer membrane. It carries out the reaction xyloglucan + H2O = xyloglucan oligosaccharides.. It functions in the pathway glucan metabolism; xyloglucan degradation. Its function is as follows. Catalyzes endohydrolysis of 1,4-beta-D-glucosidic linkages in xyloglucan with retention of the beta-configuration of the glycosyl residues in xyloglucan degradation. Cleaves the backbone of the 3 major types of natural xyloglucans (seed galactoxyloglucan from tamarind kernel, dicot fucogalactoxyloglucan from lettuce leaves, and solanaceous arabinogalactoxyloglucan from tomato fruit), to produce xyloglucan oligosaccharides. This is Xyloglucan-specific endo-beta-1,4-glucanase BoGH5A from Bacteroides ovatus (strain ATCC 8483 / DSM 1896 / JCM 5824 / BCRC 10623 / CCUG 4943 / NCTC 11153).